The following is a 192-amino-acid chain: MGNSKLSKEEKEEIIKKTKYTPEDIEQLIKDFKVAAASDKKSGFSQEEFIKFFKVRFSNWDEASMVRMFTLFDSDGNGVIDVKEFITALYLMAKAPTLDKLGFFFDLFDSDKSGYLEREEVDKLVNIVVCCGKGLGYSINDAIDYAVSITSCRHIADYQKGMSREEFIKSASQSENFVKVICFYESPCMQLY.

2 consecutive EF-hand domains span residues 60–95 (WDEASMVRMFTLFDSDGNGVIDVKEFITALYLMAKA) and 96–131 (PTLDKLGFFFDLFDSDKSGYLEREEVDKLVNIVVCC). Ca(2+) contacts are provided by aspartate 73, aspartate 75, asparagine 77, glutamate 84, aspartate 109, aspartate 111, serine 113, tyrosine 115, and glutamate 120.

The protein belongs to the recoverin family.

This Dictyostelium discoideum (Social amoeba) protein is Calcium-binding protein K (cbpK).